Reading from the N-terminus, the 484-residue chain is Glycogen synthase (484 aa).

K15 lines the ADP-alpha-D-glucose pocket.

This sequence belongs to the glycosyltransferase 1 family. Bacterial/plant glycogen synthase subfamily.

It carries out the reaction [(1-&gt;4)-alpha-D-glucosyl](n) + ADP-alpha-D-glucose = [(1-&gt;4)-alpha-D-glucosyl](n+1) + ADP + H(+). It participates in glycan biosynthesis; glycogen biosynthesis. Its function is as follows. Synthesizes alpha-1,4-glucan chains using ADP-glucose. The polypeptide is Glycogen synthase (Syntrophotalea carbinolica (strain DSM 2380 / NBRC 103641 / GraBd1) (Pelobacter carbinolicus)).